The following is an 887-amino-acid chain: Endoglucanase 1 (887 aa).

The N-terminal stretch at 1 to 55 is a signal peptide; sequence MRLVNSLGRRKILLILAVIVAFSTVLLFAKLWGRKTSSTLDEVGSKTHGDLTAEN. The interval 40–66 is disordered; sequence LDEVGSKTHGDLTAENKNGGYLPEEEI. The segment covering 43-53 has biased composition (basic and acidic residues); sequence VGSKTHGDLTA. A catalytic region spans residues 56 to 518; sequence KNGGYLPEEE…AKMYKLYGGS (463 aa). D131 (nucleophile) is an active-site residue. The disordered stretch occupies residues 441-460; the sequence is ENPPKRPHHRTAHGSWADSQ. Active-site residues include H448, D486, and E495. Residues 529–684 form the CBM3 1 domain; it reads VPEDEIFVEA…GVLVFGREPG (156 aa). Residues 684–730 form a disordered region; it reads GSASKSTSKDNGLSKATPTVKTESQPTAKHTQNPASDFKTPANQNSV. The span at 686–729 shows a compositional bias: polar residues; it reads ASKSTSKDNGLSKATPTVKTESQPTAKHTQNPASDFKTPANQNS. The CBM3 2 domain occupies 736-887; that stretch reads IKGEVVLQYA…SNKLVYGKEP (152 aa).

It belongs to the glycosyl hydrolase 9 (cellulase E) family.

The enzyme catalyses Endohydrolysis of (1-&gt;4)-beta-D-glucosidic linkages in cellulose, lichenin and cereal beta-D-glucans.. Its pathway is glycan metabolism; cellulose degradation. In terms of biological role, this enzyme catalyzes the endohydrolysis of 1,4-beta-glucosidic linkages in cellulose, lichenin and cereal beta-D-glucans. Principally active against barley beta-glucan. This chain is Endoglucanase 1 (celI), found in Acetivibrio thermocellus (strain ATCC 27405 / DSM 1237 / JCM 9322 / NBRC 103400 / NCIMB 10682 / NRRL B-4536 / VPI 7372) (Clostridium thermocellum).